The sequence spans 430 residues: Ribosomal protein uS12 methylthiotransferase RimO (430 aa).

The region spanning 2 to 119 (ISVYSISLGC…WPAMLAHALK (118 aa)) is the MTTase N-terminal domain. [4Fe-4S] cluster is bound by residues cysteine 11, cysteine 46, cysteine 81, cysteine 145, cysteine 149, and cysteine 152. The Radical SAM core domain occupies 131–361 (STGPSYAWLK…MEVQAEISEE (231 aa)). The 67-residue stretch at 364 to 430 (AVHEGTRQQV…TRTYDLVALA (67 aa)) folds into the TRAM domain.

The protein belongs to the methylthiotransferase family. RimO subfamily. Requires [4Fe-4S] cluster as cofactor.

It is found in the cytoplasm. The catalysed reaction is L-aspartate(89)-[ribosomal protein uS12]-hydrogen + (sulfur carrier)-SH + AH2 + 2 S-adenosyl-L-methionine = 3-methylsulfanyl-L-aspartate(89)-[ribosomal protein uS12]-hydrogen + (sulfur carrier)-H + 5'-deoxyadenosine + L-methionine + A + S-adenosyl-L-homocysteine + 2 H(+). Catalyzes the methylthiolation of an aspartic acid residue of ribosomal protein uS12. In Nitratidesulfovibrio vulgaris (strain ATCC 29579 / DSM 644 / CCUG 34227 / NCIMB 8303 / VKM B-1760 / Hildenborough) (Desulfovibrio vulgaris), this protein is Ribosomal protein uS12 methylthiotransferase RimO.